Consider the following 330-residue polypeptide: Catharanthine synthase (330 aa).

Positions 81–83 (HGA) match the Involved in the stabilization of the negatively charged intermediate by the formation of the oxyanion hole motif. Gly84 is a binding site for catharanthine. Ser173 acts as the Proton acceptor in catalysis. The active site involves Asp274. Position 305 (Tyr305) interacts with catharanthine. Tyr305 functions as the Proton donor/acceptor in the catalytic mechanism.

It belongs to the 'GDXG' lipolytic enzyme family. In terms of assembly, interacts with dehydroprecondylocarpine acetate synthase (DPAS). Expressed in leaf epidermis.

It localises to the cytoplasm. Its subcellular location is the cytosol. The protein localises to the nucleus. It catalyses the reaction dehydrosecodine = catharanthine. The protein operates within alkaloid biosynthesis. Its function is as follows. Component of iboga and aspidosperma monoterpenoid indole alkaloids (MIAs, e.g. tabersonine and catharanthine) biosynthesis pathway from 19E-geissoschizine, psychoactive compounds likely to be used in the treatment of opioid dependence. Catalyzes the conversion of dehydrosecodine to catharanthine. This is Catharanthine synthase from Catharanthus roseus (Madagascar periwinkle).